The following is a 98-amino-acid chain: MFDLRTKVMIGIASTLLIAAIVLITVVFCLYLKISKALKCAREVESCMDPTKAVSEKMIRGKPIIADPCRPLQCCDNCSLFKDVGAMPPCFCGTNEGL.

A signal peptide spans 1-29; it reads MFDLRTKVMIGIASTLLIAAIVLITVVFC.

It belongs to the FAM24 family.

The protein localises to the secreted. This Rattus norvegicus (Rat) protein is Protein FAM24A (Fam24a).